A 486-amino-acid chain; its full sequence is Serine/threonine-protein kinase 33 (486 aa).

Residues 39 to 100 (VVEMSQTSST…WGRGNFTEGK (62 aa)) are disordered. Residues 41-53 (EMSQTSSTGSSEF) are compositionally biased toward polar residues. Residues 57–66 (PEKRKEKGAS) show a composition bias toward basic and acidic residues. Positions 68 to 80 (DVTSGKDSPSKSS) are enriched in polar residues. The Protein kinase domain occupies 116–381 (YTFGRILGQG…AKELLDNQWL (266 aa)). Residues 122 to 130 (LGQGSFGMV) and Lys145 each bind ATP. Residue Asp238 is the Proton acceptor of the active site. The segment at 402–451 (KNNPESDEESTTDQRDSRSGQEESKVYQPSRNVPDVSNSSDEEEGKQVGR) is disordered. Ser407 carries the phosphoserine modification. A compositionally biased stretch (basic and acidic residues) spans 413-426 (TDQRDSRSGQEESK). Positions 428-440 (YQPSRNVPDVSNS) are enriched in polar residues.

This sequence belongs to the protein kinase superfamily. CAMK Ser/Thr protein kinase family. CaMK subfamily. Interacts with vimentin/VIM. Autophosphorylated.

The protein resides in the cytoplasm. It is found in the perinuclear region. It carries out the reaction L-seryl-[protein] + ATP = O-phospho-L-seryl-[protein] + ADP + H(+). It catalyses the reaction L-threonyl-[protein] + ATP = O-phospho-L-threonyl-[protein] + ADP + H(+). Serine/threonine protein kinase which phosphorylates vimentin/VIM. Therefore may play a specific role in the dynamic behavior of the intermediate filament cytoskeleton. This Bos taurus (Bovine) protein is Serine/threonine-protein kinase 33 (STK33).